Reading from the N-terminus, the 1072-residue chain is Neurofilament heavy polypeptide (1072 aa).

Phosphoserine is present on serine 74. Residues 94 to 409 (EKEQLQALND…KLLEGEECRI (316 aa)) enclose the IF rod domain. 3 coiled-coil regions span residues 98 to 132 (LQAL…LRQQ), 174 to 222 (IAHV…LQEE), and 293 to 380 (LDRL…QLRE). Residues 278–643 (TVQSTLQSEE…AKSPAEAKSP (366 aa)) are 55 X 6 AA approximate tandem repeats of K-S-P-[VAGSE]-[KEVTSGA]-[EAVK]. Residues serine 343, serine 414, and serine 417 each carry the phosphoserine modification. The disordered stretch occupies residues 454 to 1072 (EEQTEEIQVT…PEDKAAKGDK (619 aa)). Positions 455 to 487 (EQTEEIQVTEEVTEEEDKEAQGEEEEEAEEGGE) are enriched in acidic residues. Residues 488-499 (EAATTSPPAEEA) show a composition bias toward low complexity. Residue serine 501 is modified to Phosphoserine. Residues 501–584 (SPEKETKSPV…KSPAEAKSPA (84 aa)) are compositionally biased toward basic and acidic residues. 36 consecutive repeat copies span residues 507–512 (KSPVKE), 515–520 (KSPAEA), 521–526 (KSPAEA), 527–532 (KSPAEA), 533–538 (KSPAEV), 539–544 (KSPAEV), 545–550 (KSPAEA), 551–556 (KSPAEA), 557–562 (KSPAEV), 563–568 (KSPAEV), 569–574 (KSPAEA), 575–580 (KSPAEA), 581–586 (KSPAEV), 587–592 (KSPATV), 593–598 (KSPGEA), 599–604 (KSPAEA), 605–610 (KSPAEV), 611–616 (KSPVEA), 617–622 (KSPAEA), 623–628 (KSPASV), 629–634 (KSPGEA), 635–640 (KSPAEA), 641–646 (KSPAEV), 647–652 (KSPATV), 653–658 (KSPVEA), 659–664 (KSPAEV), 665–670 (KSPVTV), 671–676 (KSPAEA), 677–682 (KSPVEV), 683–688 (KSPASV), 689–694 (KSPSEA), 695–700 (KSPAGA), 701–706 (KSPAEA), 707–712 (KSPVVA), 713–718 (KSPAEA), and 719–724 (KSPAEA). Residues serine 516, serine 522, serine 528, serine 534, serine 540, serine 546, serine 552, serine 558, serine 564, serine 570, serine 576, serine 582, serine 588, serine 594, serine 600, serine 606, serine 612, serine 618, serine 624, serine 627, serine 630, serine 636, serine 642, serine 648, serine 654, serine 660, serine 666, serine 672, serine 678, serine 684, serine 687, serine 690, serine 696, serine 702, serine 708, serine 714, and serine 720 each carry the phosphoserine modification. Over residues 600 to 620 (SPAEAKSPAEVKSPVEAKSPA) the composition is skewed to basic and acidic residues. Residues 621 to 631 (EAKSPASVKSP) show a composition bias toward low complexity. Over residues 720-774 (SPAEAKPPAEAKSPAEAKSPAEAKSPAEAKSPAEAKSPVEVKSPEKAKSPVKEGA) the composition is skewed to basic and acidic residues. Residues 725 to 730 (KPPAEA) form a 37; approximate repeat. A run of 7 repeats spans residues 731 to 736 (KSPAEA), 737 to 742 (KSPAEA), 743 to 748 (KSPAEA), 749 to 754 (KSPAEA), 755 to 760 (KSPVEV), 761 to 766 (KSPEKA), and 767 to 772 (KSPVKE). Phosphoserine is present on residues serine 732, serine 738, serine 744, serine 750, serine 756, and serine 762. The stretch at 775–780 (KSLAEA) is one 45; approximate repeat. Residues serine 776, serine 782, and serine 788 each carry the phosphoserine modification. 2 tandem repeats follow at residues 781-786 (KSPEKA) and 787-792 (KSPVKE). 2 stretches are compositionally biased toward basic and acidic residues: residues 781-953 (KSPE…KAAA) and 963-1072 (GVKE…KGDK). Residues 795-800 (KPPAEV) form a 48; approximate repeat. Repeat copies occupy residues 801 to 806 (KSPEKA), 807 to 812 (KSPMKE), 815 to 820 (KSPEKA), and 826 to 831 (KSPEAK). A phosphoserine mark is found at serine 802, serine 808, serine 816, and serine 827. Threonine 832 is modified (phosphothreonine). A phosphoserine mark is found at serine 846, serine 852, serine 860, serine 880, and serine 937. 3 tandem repeats follow at residues 851–856 (KSPAKE), 859–864 (KSPEKE), and 879–884 (KSPVEE).

Belongs to the intermediate filament family. As to quaternary structure, forms heterodimers with NEFL; which can further hetero-oligomerize (in vitro). Forms heterodimers with INA (in vitro). Post-translationally, there are a number of repeats of the tripeptide K-S-P, NFH is phosphorylated on a number of the serines in this motif. It is thought that phosphorylation of NFH results in the formation of interfilament cross bridges that are important in the maintenance of axonal caliber. In terms of processing, phosphorylation seems to play a major role in the functioning of the larger neurofilament polypeptides (NF-M and NF-H), the levels of phosphorylation being altered developmentally and coincidentally with a change in the neurofilament function. Phosphorylated in the head and rod regions by the PKC kinase PKN1, leading to the inhibition of polymerization. As to expression, expressed in the dorsal root ganglion neurons (at protein level). Expressed in cutaneous and muscular sensory neurons.

The protein resides in the cytoplasm. Its subcellular location is the cytoskeleton. The protein localises to the cell projection. It localises to the axon. Functionally, neurofilaments usually contain three intermediate filament proteins: NEFL, NEFM, and NEFH which are involved in the maintenance of neuronal caliber. NEFH has an important function in mature axons that is not subserved by the two smaller NEF proteins. May additionally cooperate with the neuronal intermediate filament proteins PRPH and INA to form neuronal filamentous networks. In Rattus norvegicus (Rat), this protein is Neurofilament heavy polypeptide (Nefh).